Reading from the N-terminus, the 124-residue chain is Fluoride-specific ion channel FluC (124 aa).

The next 4 helical transmembrane spans lie at 5–25, 36–56, 70–90, and 100–120; these read LVVF…NLAA, TMII…WFAV, TGIL…FLLM, and LYVL…LAVI. Na(+) is bound by residues glycine 74 and threonine 77.

The protein belongs to the fluoride channel Fluc/FEX (TC 1.A.43) family.

Its subcellular location is the cell inner membrane. It catalyses the reaction fluoride(in) = fluoride(out). Na(+) is not transported, but it plays an essential structural role and its presence is essential for fluoride channel function. Functionally, fluoride-specific ion channel. Important for reducing fluoride concentration in the cell, thus reducing its toxicity. The chain is Fluoride-specific ion channel FluC from Methylobacterium nodulans (strain LMG 21967 / CNCM I-2342 / ORS 2060).